A 291-amino-acid chain; its full sequence is Nucleotide-binding protein lhv_0732 (291 aa).

13–20 contributes to the ATP binding site; sequence GMSGAGKT. Residue 61-64 coordinates GTP; it reads DLRV.

It belongs to the RapZ-like family.

Displays ATPase and GTPase activities. In Lactobacillus helveticus (strain DPC 4571), this protein is Nucleotide-binding protein lhv_0732.